The sequence spans 360 residues: MSAEASPANLSAKAAGRLPVALDAMGGDHGLTPNVDGAVQAARSGVSVLLVGDRVKLHAELGKHEGSSRLPIEVVDAPDVIGMEEHASDVRSRTGASINVCTRLVKEGRAAAAVSMGHSGATMASALLTLGRIKGVDRPAILAHLPAQGGFTTLLDAGANADVKPAYLAQWARLATVYLKVLEDRDNPTVGLLSIGEEDHKGSQQVVEAHTLLRALDGQGITFYGNVEGRDIFRSTTDIVVTDGFTGNVVLKLAEGEARVLLGWVKEALNSNVKSKLGGLLVRDSLRGLAERMDPSTLRREHLDRGAGAGLYRPRQRRRPRRQKRRAACRPRPRSAAGRAPGSGVRGAAGLRTAEPPGSL.

Positions 296–305 are enriched in basic and acidic residues; that stretch reads STLRREHLDR. The interval 296–360 is disordered; sequence STLRREHLDR…LRTAEPPGSL (65 aa). The span at 314–333 shows a compositional bias: basic residues; the sequence is PRQRRRPRRQKRRAACRPRP. Low complexity predominate over residues 334 to 350; that stretch reads RSAAGRAPGSGVRGAAG.

It belongs to the PlsX family. Homodimer. Probably interacts with PlsY.

The protein resides in the cytoplasm. The catalysed reaction is a fatty acyl-[ACP] + phosphate = an acyl phosphate + holo-[ACP]. The protein operates within lipid metabolism; phospholipid metabolism. Functionally, catalyzes the reversible formation of acyl-phosphate (acyl-PO(4)) from acyl-[acyl-carrier-protein] (acyl-ACP). This enzyme utilizes acyl-ACP as fatty acyl donor, but not acyl-CoA. The chain is Phosphate acyltransferase from Deinococcus radiodurans (strain ATCC 13939 / DSM 20539 / JCM 16871 / CCUG 27074 / LMG 4051 / NBRC 15346 / NCIMB 9279 / VKM B-1422 / R1).